We begin with the raw amino-acid sequence, 102 residues long: Large ribosomal subunit protein uL23 (102 aa).

Belongs to the universal ribosomal protein uL23 family. Part of the 50S ribosomal subunit. Contacts protein L29, and trigger factor when it is bound to the ribosome.

One of the early assembly proteins it binds 23S rRNA. One of the proteins that surrounds the polypeptide exit tunnel on the outside of the ribosome. Forms the main docking site for trigger factor binding to the ribosome. The sequence is that of Large ribosomal subunit protein uL23 from Methylobacillus flagellatus (strain ATCC 51484 / DSM 6875 / VKM B-1610 / KT).